A 624-amino-acid polypeptide reads, in one-letter code: 1-deoxy-D-xylulose-5-phosphate synthase (624 aa).

Thiamine diphosphate is bound by residues histidine 80 and glycine 121–serine 123. Aspartate 152 provides a ligand contact to Mg(2+). Thiamine diphosphate-binding positions include glycine 153–alanine 154, asparagine 181, tyrosine 289, and glutamate 371. Asparagine 181 is a Mg(2+) binding site.

It belongs to the transketolase family. DXPS subfamily. As to quaternary structure, homodimer. Mg(2+) serves as cofactor. Requires thiamine diphosphate as cofactor.

The enzyme catalyses D-glyceraldehyde 3-phosphate + pyruvate + H(+) = 1-deoxy-D-xylulose 5-phosphate + CO2. The protein operates within metabolic intermediate biosynthesis; 1-deoxy-D-xylulose 5-phosphate biosynthesis; 1-deoxy-D-xylulose 5-phosphate from D-glyceraldehyde 3-phosphate and pyruvate: step 1/1. Catalyzes the acyloin condensation reaction between C atoms 2 and 3 of pyruvate and glyceraldehyde 3-phosphate to yield 1-deoxy-D-xylulose-5-phosphate (DXP). This is 1-deoxy-D-xylulose-5-phosphate synthase from Blochmanniella pennsylvanica (strain BPEN).